Reading from the N-terminus, the 572-residue chain is Protein IQ-DOMAIN 30 (572 aa).

Residues 75 to 96 are disordered; that stretch reads SDDEIQVSEVQPTDSQDVASVP. The segment covering 82–92 has biased composition (polar residues); that stretch reads SEVQPTDSQDV. 2 IQ domains span residues 108 to 136 and 137 to 154; these read QEIA…GIIR and LQAL…VSTL. Positions 159–178 are calmodulin-binding; it reads GIVRLQALARGREIRHSDIG. Disordered regions lie at residues 282-332 and 399-572; these read RPKK…MDNP and IQTH…EWKR. Polar residues-rich tracts occupy residues 291-305 and 400-419; these read PSSN…QTSS and QTHT…VNQI. The segment covering 428–455 has biased composition (basic and acidic residues); sequence AEEKEDVKEERTPKQNHKENSAGKENQK. Composition is skewed to polar residues over residues 459-493, 502-514, and 522-560; these read KASS…QATK, QGSS…GTTE, and LPSS…SSRE.

The protein belongs to the IQD family. Binds to multiple calmodulin (CaM) in the presence of Ca(2+) and CaM-like proteins.

It localises to the nucleus envelope. The protein localises to the cytoplasm. The protein resides in the cytoskeleton. In terms of biological role, may be involved in cooperative interactions with calmodulins or calmodulin-like proteins. Recruits calmodulin proteins to microtubules, thus being a potential scaffold in cellular signaling and trafficking. May associate with nucleic acids and regulate gene expression at the transcriptional or post-transcriptional level. This chain is Protein IQ-DOMAIN 30, found in Arabidopsis thaliana (Mouse-ear cress).